Consider the following 328-residue polypeptide: Cytochrome f (328 aa).

The N-terminal stretch at 1–44 (MRNPDTLGLWTKTMVALRRFTVLAIATVSVFLITDLGLPQAASA) is a signal peptide. Positions 45, 66, 69, and 70 each coordinate heme. A helical membrane pass occupies residues 296–313 (FLVLFLAGIMLSQILLVL).

Belongs to the cytochrome f family. As to quaternary structure, the 4 large subunits of the cytochrome b6-f complex are cytochrome b6, subunit IV (17 kDa polypeptide, PetD), cytochrome f and the Rieske protein, while the 4 small subunits are PetG, PetL, PetM and PetN. The complex functions as a dimer. Heme is required as a cofactor.

The protein localises to the cellular thylakoid membrane. In terms of biological role, component of the cytochrome b6-f complex, which mediates electron transfer between photosystem II (PSII) and photosystem I (PSI), cyclic electron flow around PSI, and state transitions. The polypeptide is Cytochrome f (petA) (Synechocystis sp. (strain ATCC 27184 / PCC 6803 / Kazusa)).